Here is a 205-residue protein sequence, read N- to C-terminus: Heme-binding protein 2 (205 aa).

The segment at 1–37 is disordered; it reads MAEEPEPDLGVAEGSEDQALEMPSWKAPEDIDPQPGS. An N-acetylalanine modification is found at A2. Phosphoserine is present on S181.

It belongs to the HEBP family. In terms of assembly, monomer. Interacts with LRPPRC. May interact with BCL2L1; an interaction with BCL2L1 was observed using a peptide, but not with the full-length protein. The full-length protein would have to undergo a major conformation change for the interaction to occur. Interacts with PDCD6.

It is found in the cytoplasm. It localises to the mitochondrion. Functionally, can promote mitochondrial permeability transition and facilitate necrotic cell death under different types of stress conditions. May have low affinity for heme. The polypeptide is Heme-binding protein 2 (Hebp2) (Mus musculus (Mouse)).